We begin with the raw amino-acid sequence, 317 residues long: Olfactory receptor 8B3 (317 aa).

Residues 1 to 32 lie on the Extracellular side of the membrane; it reads MISMLAGNGSSVTEFVLAGLTDRPELQLPLFY. Asn-8 carries N-linked (GlcNAc...) asparagine glycosylation. Residues 33–53 traverse the membrane as a helical segment; sequence LFLIIYIITVVGNLGLIILIG. The Cytoplasmic portion of the chain corresponds to 54-59; that stretch reads LNPHLH. Residues 60–80 form a helical membrane-spanning segment; the sequence is TPMYYFLFNLSFIDLCYSSVF. Residues 81–97 lie on the Extracellular side of the membrane; that stretch reads SPKMLINFVSEKNSISY. The helical transmembrane segment at 98-118 threads the bilayer; the sequence is AGCMTQLFLFLFFVISECYML. The Cytoplasmic segment spans residues 119–136; it reads TSMAYDRYVAICNPLLYK. A helical membrane pass occupies residues 137-157; sequence VTMSPQICSVISFAAYGMGFA. Over 158 to 199 the chain is Extracellular; the sequence is GSSAHTGCMLRLTFCNVNVINHYLCDILPLLQLSCTSTYVNE. Residues 200–220 form a helical membrane-spanning segment; it reads VVVLIVVGINITVPSFTILIS. Residues 221–242 are Cytoplasmic-facing; it reads YVFILANILNIKSTQGRAKAFS. The helical transmembrane segment at 243 to 263 threads the bilayer; the sequence is TCSSHIMAISLFFGSAAFMYL. Over 264-274 the chain is Extracellular; that stretch reads KYSSGSMEQGK. The helical transmembrane segment at 275-294 threads the bilayer; it reads ISSVFYTNVGPMLNPLIYSL. Topologically, residues 295–317 are cytoplasmic; it reads RNKDVKVALRKSLIKFREKTDFN.

Belongs to the G-protein coupled receptor 1 family.

The protein localises to the cell membrane. Its function is as follows. Odorant receptor. In Mus musculus (Mouse), this protein is Olfactory receptor 8B3.